The primary structure comprises 214 residues: Adenylate kinase (214 aa).

10–15 (GVGKGT) serves as a coordination point for ATP. The NMP stretch occupies residues 30–59 (STGDILRAAVKELTPMGAKAKGYMDSGALV). AMP-binding positions include threonine 31, arginine 36, 57 to 59 (ALV), 85 to 88 (GFPR), and glutamine 92. The tract at residues 126–163 (GRRACANCGAGYHVDFAPSKVAGVCDACSGQLVQREDD) is LID. Arginine 127 serves as a coordination point for ATP. The Zn(2+) site is built by cysteine 130, cysteine 133, cysteine 150, and cysteine 153. 2 residues coordinate AMP: arginine 160 and arginine 171. Glycine 199 contributes to the ATP binding site.

It belongs to the adenylate kinase family. As to quaternary structure, monomer.

Its subcellular location is the cytoplasm. It catalyses the reaction AMP + ATP = 2 ADP. It participates in purine metabolism; AMP biosynthesis via salvage pathway; AMP from ADP: step 1/1. Catalyzes the reversible transfer of the terminal phosphate group between ATP and AMP. Plays an important role in cellular energy homeostasis and in adenine nucleotide metabolism. The protein is Adenylate kinase of Citrifermentans bemidjiense (strain ATCC BAA-1014 / DSM 16622 / JCM 12645 / Bem) (Geobacter bemidjiensis).